The chain runs to 143 residues: Ribosome-binding factor A (143 aa).

Residues 123 to 143 (DKSLQENYKQNDKETKAEKLR) form a disordered region.

It belongs to the RbfA family. Monomer. Binds 30S ribosomal subunits, but not 50S ribosomal subunits or 70S ribosomes.

Its subcellular location is the cytoplasm. One of several proteins that assist in the late maturation steps of the functional core of the 30S ribosomal subunit. Associates with free 30S ribosomal subunits (but not with 30S subunits that are part of 70S ribosomes or polysomes). Required for efficient processing of 16S rRNA. May interact with the 5'-terminal helix region of 16S rRNA. The chain is Ribosome-binding factor A from Francisella tularensis subsp. novicida (strain U112).